The primary structure comprises 526 residues: tRNA modification GTPase MSS1, mitochondrial (526 aa).

Residues 1-19 (MNSASFLQSRLISRSFLVR) constitute a mitochondrion transit peptide. In terms of domain architecture, TrmE-type G spans 274 to 444 (GIKLVLLGAP…LISTLTSNFE (171 aa)). GTP contacts are provided by residues 281-288 (GAPNVGKS), 328-332 (DTAGI), and 394-397 (NKSD).

The protein belongs to the TRAFAC class TrmE-Era-EngA-EngB-Septin-like GTPase superfamily. TrmE GTPase family. In terms of assembly, forms a heterodimer with MTO1.

It is found in the mitochondrion. In terms of biological role, GTPase involved in the 5-carboxymethylaminomethyl modification (mnm(5)s(2)U34) of the wobble uridine base in mitochondrial tRNAs. Involved in the expression of cytochrome c oxidase subunit 1 (COX1). Works in association with the small subunit of mitoribosomes. This is tRNA modification GTPase MSS1, mitochondrial (MSS1) from Saccharomyces cerevisiae (strain ATCC 204508 / S288c) (Baker's yeast).